The following is a 354-amino-acid chain: Guanine nucleotide-binding protein G(i) subunit alpha-3 (354 aa).

Residue Gly-2 is the site of N-myristoyl glycine attachment. A lipid anchor (S-palmitoyl cysteine) is attached at Cys-3. Residues 32 to 354 (KEVKLLLLGA…KNNLKECGLY (323 aa)) enclose the G-alpha domain. The segment at 35 to 48 (KLLLLGAGESGKST) is G1 motif. 25 residues coordinate GTP: Gly-42, Glu-43, Ser-44, Gly-45, Lys-46, Ser-47, Thr-48, Asp-150, Ser-151, Leu-175, Arg-176, Thr-177, Arg-178, Val-179, Lys-180, Thr-181, Val-201, Gly-203, Asn-269, Lys-270, Asp-272, Leu-273, Cys-325, Ala-326, and Thr-327. Ser-47 contributes to the Mg(2+) binding site. Positions 173-181 (DVLRTRVKT) are G2 motif. Residue Thr-181 participates in Mg(2+) binding. Residues 196-205 (FKMFDVGGQR) form a G3 motif region. Residues 265-272 (ILFLNKKD) are G4 motif. The interval 324–329 (TCATDT) is G5 motif.

The protein belongs to the G-alpha family. G(i/o/t/z) subfamily. As to quaternary structure, heterotrimeric G proteins are composed of 3 units; alpha, beta and gamma. The alpha subunit contains the guanine nucleotide binding site. GTP binding causes dissociation of the heterotrimer, liberating the individual subunits so that they can interact with downstream effector proteins. Forms a complex with CCDC88A/GIV and EGFR which leads to enhanced EGFR signaling and triggering of cell migration; ligand stimulation is required for recruitment of GNAI3 to the complex. Interacts (inactive GDP-bound form) with CCDC88A/GIV (via GBA motif); the interaction leads to activation of GNAI3. Interacts (inactive GDP-bound form) with CCDC88C/DAPLE (via GBA motif); the interaction leads to activation of GNAI3. Interacts (inactive GDP-bound form) with NUCB1 (via GBA motif) and NUCB2 (via GBA motif); the interaction leads to activation of GNAI3. Interacts (inactive GDP-bound form) with PLCD4 (via GBA motif); the interaction leads to activation of GNAI3. Interacts with INSR; the interaction is probably mediated by CCDC88A/GIV. Interacts with GPSM1. Interacts (GDP-bound form) with GPSM2 (via GoLoco domains). Does not interact with RGS2. Interacts with RGS8 and RGS10; this strongly enhances the intrinsic GTPase activity. Interacts with RGS16; this strongly enhances the intrinsic GTPase activity. Interacts with RGS12. Interacts (via active GTP- or inactive GDP-bound form) with RGS14. Interacts (via active GTP-bound form) with TRPC5 (via ANK repeats) in a homotetrameric ion channel; the interaction is direct and activates the channel activity. As to expression, ubiquitously expressed.

The protein resides in the cytoplasm. It localises to the cell membrane. Its subcellular location is the cytoskeleton. It is found in the microtubule organizing center. The protein localises to the centrosome. In terms of biological role, heterotrimeric guanine nucleotide-binding proteins (G proteins) function as transducers downstream of G protein-coupled receptors (GPCRs) in numerous signaling cascades. The alpha chain contains the guanine nucleotide binding site and alternates between an active, GTP-bound state and an inactive, GDP-bound state. Signaling by an activated GPCR promotes GDP release and GTP binding. The alpha subunit has a low GTPase activity that converts bound GTP to GDP, thereby terminating the signal. Both GDP release and GTP hydrolysis are modulated by numerous regulatory proteins. Signaling is mediated via effector proteins, such as adenylate cyclase. Inhibits adenylate cyclase activity, leading to decreased intracellular cAMP levels. Stimulates the activity of receptor-regulated K(+) channels. The active GTP-bound form prevents the association of RGS14 with centrosomes and is required for the translocation of RGS14 from the cytoplasm to the plasma membrane. May play a role in cell division. The active GTP-bound form activates the calcium permeant TRPC5 ion channels. This Cavia porcellus (Guinea pig) protein is Guanine nucleotide-binding protein G(i) subunit alpha-3 (GNAI3).